The following is a 209-amino-acid chain: MSYAYLFKYIIIGDTGVGKSCLLLQFTDKRFQPVHDLTIGVEFGARMITIDNKPIKLQIWDTAGQESFRSITRSYYRGAAGALLVYDITRRETFNHLASWLEDARQHANANMTIMLVGNKCDLSHRRAVSYEEGEQFAKEHGLIFMEASAKTAQNVEEAFVKTAGAIYKKIQDGVFDVSNESYGIKVGYVVPGQSGGAGSSSQGGGCCS.

13-21 (GDTGVGKSC) contributes to the GTP binding site. Positions 35–43 (HDLTIGVEF) match the Effector region motif. Residues 61–65 (DTAGQ), 119–122 (NKCD), and 149–151 (SAK) each bind GTP. Residues cysteine 207 and cysteine 208 are each lipidated (S-geranylgeranyl cysteine).

It belongs to the small GTPase superfamily. Rab family.

The protein localises to the endoplasmic reticulum membrane. The protein resides in the golgi apparatus membrane. In terms of biological role, protein transport. Probably involved in vesicular traffic. The polypeptide is Ras-related protein Rab-2-A (RAB2A) (Zea mays (Maize)).